A 486-amino-acid chain; its full sequence is N-succinylglutamate 5-semialdehyde dehydrogenase (486 aa).

220–225 serves as a coordination point for NAD(+); sequence GSSRTG. Active-site residues include E243 and C277.

It belongs to the aldehyde dehydrogenase family. AstD subfamily.

It carries out the reaction N-succinyl-L-glutamate 5-semialdehyde + NAD(+) + H2O = N-succinyl-L-glutamate + NADH + 2 H(+). Its pathway is amino-acid degradation; L-arginine degradation via AST pathway; L-glutamate and succinate from L-arginine: step 4/5. Its function is as follows. Catalyzes the NAD-dependent reduction of succinylglutamate semialdehyde into succinylglutamate. This is N-succinylglutamate 5-semialdehyde dehydrogenase from Shewanella frigidimarina (strain NCIMB 400).